Reading from the N-terminus, the 464-residue chain is MMSNGGDSSEIVRELEELKLKKAEIEHRISTLEAKLQDTAAVELYDAVSNGDSYLTAPELEHGLSPDQIYRYSRQLLLPSFAVEGQSNLLKSSVLVIGAGGLGSPALLYLAACGVGQLGIIDHDVVELNNMHRQIIHTEAFIGHPKVKSAAAACRSINSTIKVDEYVEALRTSNALEILSQYDIIVDATDNPPSRYMISDCCVLLGKPLVSGAALGMEGQLTVYNHNGGPCYRCLFPTPPPTSACQRCSDSGVLGVVPGVIGCLQALETIKLASLVGEPLSERMLLFDALSARMRIVKIRGRSSQCTVCGDNSSFNKQTFKDFDYEDFTQFPLFAGPLNLLPAESRISSKEFKEILQKKEQHVLLDVRPSHHYKIVSLPDSLNIPLANLETRLNELTSALKEKGNGHANTESCTNPSVFVVCRRGNDSQRAVQYLRESGFDSAKDIIGGLEAWAANVNPNFPTY.

Residues G101, D122, 129 to 133 (NNMHR), K146, and 190 to 191 (DN) each bind ATP. Zn(2+) contacts are provided by C231 and C234. C248 (glycyl thioester intermediate; for adenylyltransferase activity) is an active-site residue. Zn(2+) is bound by residues C306 and C309. The region spanning 358–462 (KKEQHVLLDV…WAANVNPNFP (105 aa)) is the Rhodanese domain. Catalysis depends on C422, which acts as the Cysteine persulfide intermediate; for sulfurtransferase activity.

The protein in the N-terminal section; belongs to the HesA/MoeB/ThiF family. UBA4 subfamily. It depends on Zn(2+) as a cofactor.

The protein localises to the cytoplasm. It catalyses the reaction [molybdopterin-synthase sulfur-carrier protein]-C-terminal Gly-Gly + ATP + H(+) = [molybdopterin-synthase sulfur-carrier protein]-C-terminal Gly-Gly-AMP + diphosphate. The enzyme catalyses [molybdopterin-synthase sulfur-carrier protein]-C-terminal Gly-Gly-AMP + S-sulfanyl-L-cysteinyl-[cysteine desulfurase] + AH2 = [molybdopterin-synthase sulfur-carrier protein]-C-terminal-Gly-aminoethanethioate + L-cysteinyl-[cysteine desulfurase] + A + AMP + 2 H(+). The protein operates within tRNA modification; 5-methoxycarbonylmethyl-2-thiouridine-tRNA biosynthesis. It participates in cofactor biosynthesis; molybdopterin biosynthesis. Its function is as follows. Plays a central role in 2-thiolation of mcm(5)S(2)U at tRNA wobble positions of cytosolic tRNA(Lys), tRNA(Glu) and tRNA(Gln). Also essential during biosynthesis of the molybdenum cofactor. Acts by mediating the C-terminal thiocarboxylation of sulfur carriers URM1 and MOCS2A. Its N-terminus first activates URM1 and MOCS2A as acyl-adenylates (-COAMP), then the persulfide sulfur on the catalytic cysteine is transferred to URM1 and MOCS2A to form thiocarboxylation (-COSH) of their C-terminus. The reaction probably involves hydrogen sulfide that is generated from the persulfide intermediate and that acts as a nucleophile towards URM1 and MOCS2A. Subsequently, a transient disulfide bond is formed. Does not use thiosulfate as sulfur donor; NFS1 probably acting as a sulfur donor for thiocarboxylation reactions. The chain is Adenylyltransferase and sulfurtransferase MOCS3 from Arabidopsis thaliana (Mouse-ear cress).